A 589-amino-acid chain; its full sequence is Phenylalanine--tRNA ligase beta subunit (589 aa).

Residues 302-377 (LEVREERISV…IAYGYNNIKK (76 aa)) form the B5 domain. Mg(2+)-binding residues include D355, D361, E364, and D365.

Belongs to the phenylalanyl-tRNA synthetase beta subunit family. Type 2 subfamily. As to quaternary structure, tetramer of two alpha and two beta subunits. Requires Mg(2+) as cofactor.

It localises to the cytoplasm. It catalyses the reaction tRNA(Phe) + L-phenylalanine + ATP = L-phenylalanyl-tRNA(Phe) + AMP + diphosphate + H(+). The protein is Phenylalanine--tRNA ligase beta subunit of Drosophila melanogaster (Fruit fly).